Here is a 165-residue protein sequence, read N- to C-terminus: Large ribosomal subunit protein uL10 (165 aa).

This sequence belongs to the universal ribosomal protein uL10 family. Part of the ribosomal stalk of the 50S ribosomal subunit. The N-terminus interacts with L11 and the large rRNA to form the base of the stalk. The C-terminus forms an elongated spine to which L12 dimers bind in a sequential fashion forming a multimeric L10(L12)X complex.

Forms part of the ribosomal stalk, playing a central role in the interaction of the ribosome with GTP-bound translation factors. In Hamiltonella defensa subsp. Acyrthosiphon pisum (strain 5AT), this protein is Large ribosomal subunit protein uL10.